A 335-amino-acid chain; its full sequence is ATP-dependent 6-phosphofructokinase (335 aa).

Gly-11 lines the ATP pocket. ADP is bound at residue 21–25 (RAVVR). Residues 72-73 (RY) and 102-105 (GDGS) contribute to the ATP site. Asp-103 is a Mg(2+) binding site. Position 125–127 (125–127 (TID)) interacts with substrate. Asp-127 functions as the Proton acceptor in the catalytic mechanism. Arg-154 contributes to the ADP binding site. Substrate is bound by residues Arg-162 and 169 to 171 (MGR). ADP contacts are provided by residues 185–187 (GAD) and 213–215 (KKH). Substrate contacts are provided by residues Glu-222, Arg-244, and 250 to 253 (HIQR).

The protein belongs to the phosphofructokinase type A (PFKA) family. ATP-dependent PFK group I subfamily. Prokaryotic clade 'B1' sub-subfamily. As to quaternary structure, homotetramer. Mg(2+) is required as a cofactor.

Its subcellular location is the cytoplasm. The catalysed reaction is beta-D-fructose 6-phosphate + ATP = beta-D-fructose 1,6-bisphosphate + ADP + H(+). Its pathway is carbohydrate degradation; glycolysis; D-glyceraldehyde 3-phosphate and glycerone phosphate from D-glucose: step 3/4. Its activity is regulated as follows. Allosterically activated by ADP and other diphosphonucleosides, and allosterically inhibited by phosphoenolpyruvate. Catalyzes the phosphorylation of D-fructose 6-phosphate to fructose 1,6-bisphosphate by ATP, the first committing step of glycolysis. This chain is ATP-dependent 6-phosphofructokinase, found in Streptococcus pneumoniae serotype 19F (strain G54).